The sequence spans 286 residues: UDP-3-O-acyl-N-acetylglucosamine deacetylase (286 aa).

3 residues coordinate Zn(2+): His-79, His-237, and Asp-241. Catalysis depends on His-264, which acts as the Proton donor.

It belongs to the LpxC family. Zn(2+) serves as cofactor.

The enzyme catalyses a UDP-3-O-[(3R)-3-hydroxyacyl]-N-acetyl-alpha-D-glucosamine + H2O = a UDP-3-O-[(3R)-3-hydroxyacyl]-alpha-D-glucosamine + acetate. The protein operates within glycolipid biosynthesis; lipid IV(A) biosynthesis; lipid IV(A) from (3R)-3-hydroxytetradecanoyl-[acyl-carrier-protein] and UDP-N-acetyl-alpha-D-glucosamine: step 2/6. Its function is as follows. Catalyzes the hydrolysis of UDP-3-O-myristoyl-N-acetylglucosamine to form UDP-3-O-myristoylglucosamine and acetate, the committed step in lipid A biosynthesis. The protein is UDP-3-O-acyl-N-acetylglucosamine deacetylase of Chlamydia trachomatis serovar L2 (strain ATCC VR-902B / DSM 19102 / 434/Bu).